Consider the following 461-residue polypeptide: L-seryl-tRNA(Sec) selenium transferase (461 aa).

At Lys-294 the chain carries N6-(pyridoxal phosphate)lysine.

This sequence belongs to the SelA family. Pyridoxal 5'-phosphate serves as cofactor.

The protein localises to the cytoplasm. It carries out the reaction L-seryl-tRNA(Sec) + selenophosphate + H(+) = L-selenocysteinyl-tRNA(Sec) + phosphate. It participates in aminoacyl-tRNA biosynthesis; selenocysteinyl-tRNA(Sec) biosynthesis; selenocysteinyl-tRNA(Sec) from L-seryl-tRNA(Sec) (bacterial route): step 1/1. Converts seryl-tRNA(Sec) to selenocysteinyl-tRNA(Sec) required for selenoprotein biosynthesis. In Haemophilus influenzae (strain ATCC 51907 / DSM 11121 / KW20 / Rd), this protein is L-seryl-tRNA(Sec) selenium transferase.